The primary structure comprises 103 residues: MMNNMKLLIIAVMIISAALLPALVVGSRPVKCDNCMDGGEKEEIMKMSSGVDVSHRILQAKRFIDYEALKKNLPAKPDGKPDKPDNKYRRGCSAATGCYRFTN.

The N-terminal stretch at 1-32 (MMNNMKLLIIAVMIISAALLPALVVGSRPVKC) is a signal peptide. A propeptide spans 33–58 (DNCMDGGEKEEIMKMSSGVDVSHRIL) (removed in mature form). C92 and C98 are disulfide-bonded.

It belongs to the plant rapid alkalinization factor (RALF) family. In terms of processing, proteolytically cleaved, probably by S1P, a subtilisin-like serine protease (subtilase).

It is found in the secreted. Cell signaling peptide that may regulate plant stress, growth, and development. Mediates a rapid alkalinization of extracellular space by mediating a transient increase in the cytoplasmic Ca(2+) concentration leading to a calcium-dependent signaling events through a cell surface receptor and a concomitant activation of some intracellular mitogen-activated protein kinases. In Arabidopsis thaliana (Mouse-ear cress), this protein is Protein RALF-like 18 (RALFL18).